The sequence spans 527 residues: GMP synthase [glutamine-hydrolyzing] (527 aa).

Positions 13–202 (TILVLDFGSQ…AVDICGAAQK (190 aa)) constitute a Glutamine amidotransferase type-1 domain. Cys89 functions as the Nucleophile in the catalytic mechanism. Active-site residues include His176 and Glu178. Residues 203 to 402 (WSMENFVDTE…MGIPHDLVWR (200 aa)) form the GMPS ATP-PPase domain. An ATP-binding site is contributed by 231–237 (SGGVDST). The XMP site is built by Arg304, Asp464, Lys519, and Glu525.

As to quaternary structure, homodimer. Mg(2+) serves as cofactor.

It localises to the cytoplasm. The protein resides in the cytosol. It catalyses the reaction XMP + L-glutamine + ATP + H2O = GMP + L-glutamate + AMP + diphosphate + 2 H(+). The protein operates within purine metabolism; GMP biosynthesis; GMP from XMP (L-Gln route): step 1/1. Functionally, catalyzes the conversion of xanthine monophosphate (XMP) to GMP in the presence of glutamine and ATP through an adenyl-XMP intermediate. This is GMP synthase [glutamine-hydrolyzing] (GUA1) from Yarrowia lipolytica (strain CLIB 122 / E 150) (Yeast).